The chain runs to 713 residues: Polyribonucleotide nucleotidyltransferase (713 aa).

Residues aspartate 494 and aspartate 500 each coordinate Mg(2+). The 63-residue stretch at 561-623 (PSFSTMTIPK…EAVQSAEKRV (63 aa)) folds into the KH domain. Residues 633–702 (GDVYQGTVKS…KSGKYKLSRK (70 aa)) form the S1 motif domain.

This sequence belongs to the polyribonucleotide nucleotidyltransferase family. Requires Mg(2+) as cofactor.

The protein localises to the cytoplasm. The enzyme catalyses RNA(n+1) + phosphate = RNA(n) + a ribonucleoside 5'-diphosphate. In terms of biological role, involved in mRNA degradation. Catalyzes the phosphorolysis of single-stranded polyribonucleotides processively in the 3'- to 5'-direction. This is Polyribonucleotide nucleotidyltransferase from Amoebophilus asiaticus (strain 5a2).